Here is a 636-residue protein sequence, read N- to C-terminus: Threonine--tRNA ligase (636 aa).

The TGS domain maps to 1-59 (MPIITLPDGTKKIFEQVVSVEQVAKSMGLVKAALAGEVDGELVSTSFLIKTDANLTIIT). The interval 240-531 (DHRKIGKTQD…LIEHYEGAYP (292 aa)) is catalytic. Zn(2+) is bound by residues cysteine 331, histidine 382, and histidine 508.

This sequence belongs to the class-II aminoacyl-tRNA synthetase family. As to quaternary structure, homodimer. It depends on Zn(2+) as a cofactor.

It is found in the cytoplasm. The catalysed reaction is tRNA(Thr) + L-threonine + ATP = L-threonyl-tRNA(Thr) + AMP + diphosphate + H(+). Catalyzes the attachment of threonine to tRNA(Thr) in a two-step reaction: L-threonine is first activated by ATP to form Thr-AMP and then transferred to the acceptor end of tRNA(Thr). Also edits incorrectly charged L-seryl-tRNA(Thr). This chain is Threonine--tRNA ligase, found in Vesicomyosocius okutanii subsp. Calyptogena okutanii (strain HA).